A 160-amino-acid polypeptide reads, in one-letter code: Ribosomal RNA large subunit methyltransferase H (160 aa).

S-adenosyl-L-methionine contacts are provided by L76 and G108.

This sequence belongs to the RNA methyltransferase RlmH family. Homodimer.

It localises to the cytoplasm. The enzyme catalyses pseudouridine(1915) in 23S rRNA + S-adenosyl-L-methionine = N(3)-methylpseudouridine(1915) in 23S rRNA + S-adenosyl-L-homocysteine + H(+). Its function is as follows. Specifically methylates the pseudouridine at position 1915 (m3Psi1915) in 23S rRNA. This chain is Ribosomal RNA large subunit methyltransferase H, found in Xanthobacter autotrophicus (strain ATCC BAA-1158 / Py2).